The following is a 380-amino-acid chain: Cytochrome b (380 aa).

4 helical membrane-spanning segments follow: residues 33 to 53 (FGSL…FLAM), 77 to 98 (WLIR…FLHV), 113 to 133 (WNMG…GYVL), and 178 to 198 (FFAF…VHLL). 2 residues coordinate heme: histidine 83 and histidine 97. Heme contacts are provided by histidine 182 and histidine 196. Residue histidine 201 participates in a ubiquinone binding. A run of 4 helical transmembrane segments spans residues 226-246 (VKDF…TLFF), 288-308 (LGGV…PLLH), 320-340 (ITQT…WIGG), and 347-367 (FIII…IFMP).

It belongs to the cytochrome b family. In terms of assembly, the cytochrome bc1 complex contains 11 subunits: 3 respiratory subunits (MT-CYB, CYC1 and UQCRFS1), 2 core proteins (UQCRC1 and UQCRC2) and 6 low-molecular weight proteins (UQCRH/QCR6, UQCRB/QCR7, UQCRQ/QCR8, UQCR10/QCR9, UQCR11/QCR10 and a cleavage product of UQCRFS1). This cytochrome bc1 complex then forms a dimer. Heme serves as cofactor.

It is found in the mitochondrion inner membrane. Functionally, component of the ubiquinol-cytochrome c reductase complex (complex III or cytochrome b-c1 complex) that is part of the mitochondrial respiratory chain. The b-c1 complex mediates electron transfer from ubiquinol to cytochrome c. Contributes to the generation of a proton gradient across the mitochondrial membrane that is then used for ATP synthesis. The chain is Cytochrome b (MT-CYB) from Microtus arvalis (Common vole).